Reading from the N-terminus, the 764-residue chain is MVTTHNLGFPRIGAKRELKFGLERYWKGESSRDELKALGAELRRRHWHDQRDLDLAPIGDFAFYDQVLDMSFTLGNLPKRVQDFHGDALDNYFRVARGRSAQSAEEHAACCGGVAAGEMTKWFDTNYHYIVPEFHADTNFSLDPSRLLQQLAEANAQGVNAKPVILGPVTYLWLGKAKDDSDRLALLPKLLPVYGALLDTLTAQGVEWVQIDEPILVTELDAEWRQAFRIAYAALETRRIKLLLATYFGQLQDNLTLAASLPVDGLHIDAINARDEVDALVRELPAERVLSVGAINGRNIWKTDLNAALDWLEPLAKQLGDRLWLAPSCSLLHVPVDLASEEKLDAEIRSWLAFALQKLDELKVLATALNEGRDKVADALAANAAAIDSRRRSPRVNNPAVKAAIARIDARLGNRTSPYTQRASKQSARLNLPAFPTTTIGSFPQTAEIRQARSRFKAGALDEAGYRKAMQAEIERSVREQESLELDVLVHGEAERNDMVEYFGEQLDGYAFSQFGWVQSYGSRCVKPPILFGDISRPKAMTVEWIAYAQSLTRKPMKGMLTGPVTILNWSFVRDDQPRAVSCYQLALAIREEVLDLEKAGVRVIQIDEAALREGLPLRRAQWSEYLKWAVESFRITANGVQDDTQIHTHMCYSEFNDIIASIADMDADVITIETSRSDMELLDAFDTFKYPNEIGPGVYDIHSPNIPTQDHIVGLMRKAAERIPAERLWVNPDCGLKTRQWAEVIPALTNMVAAAKMLRNQVQ.

5-methyltetrahydropteroyltri-L-glutamate-binding positions include 16–19 (RELK) and Lys121. Residues 440-442 (IGS) and Glu493 contribute to the L-homocysteine site. L-methionine contacts are provided by residues 440–442 (IGS) and Glu493. Residues 524–525 (RC) and Trp570 each bind 5-methyltetrahydropteroyltri-L-glutamate. Asp608 lines the L-homocysteine pocket. Asp608 provides a ligand contact to L-methionine. Glu614 lines the 5-methyltetrahydropteroyltri-L-glutamate pocket. The Zn(2+) site is built by His650, Cys652, and Glu674. The Proton donor role is filled by His703. Residue Cys735 participates in Zn(2+) binding.

It belongs to the vitamin-B12 independent methionine synthase family. Requires Zn(2+) as cofactor.

It carries out the reaction 5-methyltetrahydropteroyltri-L-glutamate + L-homocysteine = tetrahydropteroyltri-L-glutamate + L-methionine. It functions in the pathway amino-acid biosynthesis; L-methionine biosynthesis via de novo pathway; L-methionine from L-homocysteine (MetE route): step 1/1. In terms of biological role, catalyzes the transfer of a methyl group from 5-methyltetrahydrofolate to homocysteine resulting in methionine formation. This is 5-methyltetrahydropteroyltriglutamate--homocysteine methyltransferase from Burkholderia orbicola (strain MC0-3).